A 127-amino-acid chain; its full sequence is Fluoride-specific ion channel FluC (127 aa).

4 consecutive transmembrane segments (helical) span residues Leu4–Ser24, Gly39–Ile59, Ala68–Tyr88, and Val102–Leu122. Na(+)-binding residues include Gly78 and Thr81.

It belongs to the fluoride channel Fluc/FEX (TC 1.A.43) family.

It localises to the cell inner membrane. It carries out the reaction fluoride(in) = fluoride(out). Its activity is regulated as follows. Na(+) is not transported, but it plays an essential structural role and its presence is essential for fluoride channel function. Its function is as follows. Fluoride-specific ion channel. Important for reducing fluoride concentration in the cell, thus reducing its toxicity. The polypeptide is Fluoride-specific ion channel FluC (Thermotoga petrophila (strain ATCC BAA-488 / DSM 13995 / JCM 10881 / RKU-1)).